Here is a 346-residue protein sequence, read N- to C-terminus: Annexin A1 (346 aa).

At A2 the chain carries N-acetylalanine. S5 carries the post-translational modification Phosphoserine; by TRPM7. Residue Q19 forms an Isoglutamyl lysine isopeptide (Gln-Lys) (interchain with K-?) linkage. Y21 carries the phosphotyrosine; by EGFR modification. The tract at residues V25–D47 is disordered. A phosphoserine mark is found at S34 and S37. The residue at position 41 (T41) is a Phosphothreonine. Annexin repeat units lie at residues F42–K113, T114–K185, D197–K269, and S273–G344. An N6-acetyllysine modification is found at K58. Ca(2+) contacts are provided by G59, V60, E62, K97, L100, E105, M127, G129, G131, T132, and E134. T136 is subject to Phosphothreonine. 3 residues coordinate Ca(2+): D171, G210, and R213. Residue K214 forms a Glycyl lysine isopeptide (Lys-Gly) (interchain with G-Cter in SUMO1); alternate linkage. K214 participates in a covalent cross-link: Glycyl lysine isopeptide (Lys-Gly) (interchain with G-Cter in SUMO2); alternate. Residue G215 coordinates Ca(2+). An N6-acetyllysine modification is found at K239. D253, E255, and L256 together coordinate Ca(2+). Residue K257 forms a Glycyl lysine isopeptide (Lys-Gly) (interchain with G-Cter in SUMO1) linkage. 4 residues coordinate Ca(2+): E261, M286, G288, and G290. N6-acetyllysine is present on K312. A disulfide bridge links C324 with C343. Residues L328, E330, and T331 each contribute to the Ca(2+) site. Residue K332 forms a Glycyl lysine isopeptide (Lys-Gly) (interchain with G-Cter in SUMO1) linkage. E336 is a binding site for Ca(2+).

The protein belongs to the annexin family. In terms of assembly, homodimer; non-covalently linked. Homodimer; linked by transglutamylation. Homodimers linked by transglutamylation are observed in placenta, but not in other tissues. Interacts with S100A11. Heterotetramer, formed by two molecules each of S100A11 and ANXA1. Interacts with DYSF. Interacts with EGFR. In terms of processing, phosphorylated by EGFR. Phosphorylated by protein kinase C and TRPM7. Phosphorylated in response to EGF treatment. Post-translationally, sumoylated. Proteolytically cleaved by cathepsin CTSG to release the active N-terminal peptide Ac2-26. As to expression, detected in lung and spleen (at protein level).

The protein localises to the nucleus. It localises to the cytoplasm. The protein resides in the cell projection. It is found in the cilium. Its subcellular location is the basolateral cell membrane. The protein localises to the lateral cell membrane. It localises to the early endosome. The protein resides in the cell membrane. It is found in the cytoplasmic vesicle membrane. Its subcellular location is the apical cell membrane. The protein localises to the membrane. It localises to the endosome. The protein resides in the secreted. It is found in the extracellular space. Its subcellular location is the extracellular exosome. The protein localises to the cytoplasmic vesicle. It localises to the secretory vesicle lumen. The protein resides in the phagocytic cup. Plays important roles in the innate immune response as effector of glucocorticoid-mediated responses and regulator of the inflammatory process. Has anti-inflammatory activity. Plays a role in glucocorticoid-mediated down-regulation of the early phase of the inflammatory response. Contributes to the adaptive immune response by enhancing signaling cascades that are triggered by T-cell activation, regulates differentiation and proliferation of activated T-cells. Promotes the differentiation of T-cells into Th1 cells and negatively regulates differentiation into Th2 cells. Has no effect on unstimulated T-cells. Negatively regulates hormone exocytosis via activation of the formyl peptide receptors and reorganization of the actin cytoskeleton. Has high affinity for Ca(2+) and can bind up to eight Ca(2+) ions. Displays Ca(2+)-dependent binding to phospholipid membranes. Plays a role in the formation of phagocytic cups and phagosomes. Plays a role in phagocytosis by mediating the Ca(2+)-dependent interaction between phagosomes and the actin cytoskeleton. Its function is as follows. Functions at least in part by activating the formyl peptide receptors and downstream signaling cascades. Promotes chemotaxis of granulocytes and monocytes via activation of the formyl peptide receptors. Promotes rearrangement of the actin cytoskeleton, cell polarization and cell migration. Promotes resolution of inflammation and wound healing. Acts via neutrophil N-formyl peptide receptors to enhance the release of CXCL2. In Sus scrofa (Pig), this protein is Annexin A1 (ANXA1).